Reading from the N-terminus, the 718-residue chain is Phenylalanine--tRNA ligase beta subunit (718 aa).

The tRNA-binding domain occupies 39–153 (LNEISGIKFG…IFDLESNPLK (115 aa)). The B5 domain maps to 386-460 (SKKTFLDLNY…RFYGLEKLKD (75 aa)). Residues D438, D444, and D448 each contribute to the Mg(2+) site.

This sequence belongs to the phenylalanyl-tRNA synthetase beta subunit family. Type 1 subfamily. Tetramer of two alpha and two beta subunits. Mg(2+) serves as cofactor.

Its subcellular location is the cytoplasm. It carries out the reaction tRNA(Phe) + L-phenylalanine + ATP = L-phenylalanyl-tRNA(Phe) + AMP + diphosphate + H(+). The sequence is that of Phenylalanine--tRNA ligase beta subunit from Mesomycoplasma hyopneumoniae (strain J / ATCC 25934 / NCTC 10110) (Mycoplasma hyopneumoniae).